A 162-amino-acid chain; its full sequence is Allophycocyanin beta chain (162 aa).

Position 72 is an N4-methylasparagine (N72). (2R,3E)-phycocyanobilin is bound at residue C82.

It belongs to the phycobiliprotein family. As to quaternary structure, heterodimer of an alpha and a beta chain. Post-translationally, contains one covalently linked phycocyanobilin chromophore.

The protein localises to the cellular thylakoid membrane. Light-harvesting photosynthetic bile pigment-protein from the phycobiliprotein complex. Allophycocyanin has a maximum absorption at approximately 650 nanometers. The polypeptide is Allophycocyanin beta chain (Microchaete diplosiphon (Fremyella diplosiphon)).